The primary structure comprises 588 residues: Transcription factor 7-like 1 (588 aa).

Residues 1-31 (MPQLGGGGGGGGGGSGGGGGSSAGAAGGGDD) show a composition bias toward gly residues. The tract at residues 1–74 (MPQLGGGGGG…VKSSLVNESE (74 aa)) is CTNNB1-binding. Disordered stretches follow at residues 1 to 101 (MPQL…PRDY), 203 to 234 (SPGS…SPYY), and 409 to 506 (LYPT…LSLT). Residues 67–81 (SSLVNESENQSSSSD) show a composition bias toward low complexity. The segment covering 83 to 101 (EAERRPQPVRDTFQKPRDY) has biased composition (basic and acidic residues). The HMG box DNA-binding region spans 346–414 (VKKPLNAFML…LHSQLYPTWS (69 aa)). The Nuclear localization signal motif lies at 421–427 (KKKKRKR). Composition is skewed to low complexity over residues 431 to 441 (LSQTQSQQQVQ) and 478 to 497 (SPAT…ATHS).

This sequence belongs to the TCF/LEF family. Binds the armadillo repeat of CTNNB1 and forms a stable complex. Interacts with DAZAP2. In terms of tissue distribution, detected in hair follicles and skin keratinocytes, and at lower levels in stomach epithelium.

Its subcellular location is the nucleus. Functionally, participates in the Wnt signaling pathway. Binds to DNA and acts as a repressor in the absence of CTNNB1, and as an activator in its presence. Necessary for the terminal differentiation of epidermal cells, the formation of keratohyalin granules and the development of the barrier function of the epidermis. Down-regulates NQO1, leading to increased mitomycin c resistance. This Homo sapiens (Human) protein is Transcription factor 7-like 1 (TCF7L1).